The chain runs to 533 residues: Adenine deaminase (533 aa).

It belongs to the metallo-dependent hydrolases superfamily. Adenine deaminase family. Mn(2+) is required as a cofactor.

The enzyme catalyses adenine + H2O + H(+) = hypoxanthine + NH4(+). This is Adenine deaminase from Sulfurovum sp. (strain NBC37-1).